The following is a 2150-amino-acid chain: Hybrid signal transduction histidine kinase A (2150 aa).

The segment covering 1 to 10 has biased composition (basic and acidic residues); the sequence is MELKTFKDLN. Disordered stretches follow at residues 1–41, 68–149, 184–267, 286–323, 339–359, 415–505, 520–546, and 560–733; these read MELK…QQQQ, HIPQ…YYYS, NSSS…HQRR, KNKPLSSSTPSTVNTCGAVNNNSNNNNNNNNNSTGSLG, TEESTGGNNSPRSNCGSNCGS, NNNN…NSPR, SLTSSNNNNQSNNNTNPSINNNNGRNG, and KPVV…NGAT. The span at 19-32 shows a compositional bias: polar residues; it reads PVINTGDQPNPLRT. The segment covering 68 to 81 has biased composition (low complexity); it reads HIPQQLYQKQQQQQ. The span at 82–104 shows a compositional bias: polar residues; that stretch reads HSHSYGNHSFIHNVSPTSPSYDI. Low complexity-rich tracts occupy residues 105–145 and 184–244; these read NNNN…YNNN and NSSS…NNNI. A compositionally biased stretch (polar residues) spans 289–304; it reads PLSSSTPSTVNTCGAV. 3 stretches are compositionally biased toward low complexity: residues 305 to 318, 344 to 359, and 415 to 447; these read NNNSNNNNNNNNNS, GGNNSPRSNCGSNCGS, and NNNNNNINPNNNPNNSNNSNNNVSPRNNNHNIS. Over residues 448 to 468 the composition is skewed to polar residues; that stretch reads PRGSNISPRSNNGGSTTISPR. 3 stretches are compositionally biased toward low complexity: residues 469-485, 520-545, and 565-600; these read NISNNNNIINNINNNNI, SLTSSNNNNQSNNNTNPSINNNNGRN, and NNGNNNNNNNTNNSTTSNNNITTNNNNNNNNNINNN. Over residues 614 to 628 the composition is skewed to polar residues; sequence SKTNSLQDFETSSMN. The segment covering 657 to 727 has biased composition (low complexity); that stretch reads NSNNTNSNNS…NNNNNNNNNN (71 aa). The chain crosses the membrane as a helical span at residues 772 to 792; sequence AIILGLFIVGSSISILATLVL. Residues 838 to 1082 enclose the CHASE domain; the sequence is STSEDQFVPF…NVGGRNWMIA (245 aa). A helical transmembrane segment spans residues 1098 to 1118; sequence PYAIGGVCMLLSALVSFWFAV. The stretch at 1139–1164 forms a coiled coil; the sequence is NRKLAEKALAESQERLELAMEGSEDA. Disordered regions lie at residues 1209–1228 and 1233–1252; these read LNFKGDSKNGGSNNGTFNLF and VDSSSPQSITNVNTTNGGGG. The PAS domain maps to 1235–1317; the sequence is SSSPQSITNV…SEIKKTITRE (83 aa). The PAC domain maps to 1321–1376; it reads MEIECRMRKKYGGYLYIIMRGKVVSNETSFKDNSLRMAGTLRDMTSRKDMQRLILE. Residues 1393–1620 enclose the Histidine kinase domain; the sequence is TVSHEVRTPL…KFKCIIPFLL (228 aa). A Phosphohistidine; by autocatalysis modification is found at histidine 1396. Disordered regions lie at residues 1874–1893, 1933–1952, and 1962–2017; these read GGGSNTMNGSSGNLSNNNNF, HGNQQQQLYQQQQQQQNNSS, and QNNN…DTPV. Low complexity-rich tracts occupy residues 1878 to 1893, 1935 to 1952, and 1962 to 2002; these read NTMNGSSGNLSNNNNF, NQQQQLYQQQQQQQNNSS, and QNNN…TPTL. The region spanning 2026 to 2146 is the Response regulatory domain; that stretch reads KALIVEDNEL…TLKDALAKWG (121 aa). Aspartate 2076 bears the 4-aspartylphosphate mark.

As to quaternary structure, interacts with SDF-2, an acbA peptide involved in sporulation.

The protein resides in the cell membrane. The enzyme catalyses ATP + protein L-histidine = ADP + protein N-phospho-L-histidine.. Functionally, acts as a receptor histidine kinase for the cytokinin SDF-2 in a signal transduction pathway that regulates prestalk gene expression and controls terminal differentiation of prespore cells. Binding of SDF-2 to this protein inhibits phosphorelay and induces rapid sporulation. This protein undergoes an ATP-dependent autophosphorylation at a conserved histidine residue in the kinase core, and a phosphoryl group is then transferred to a conserved aspartate residue in the receiver domain. In Dictyostelium discoideum (Social amoeba), this protein is Hybrid signal transduction histidine kinase A (dhkA).